Here is a 438-residue protein sequence, read N- to C-terminus: Glutamyl-tRNA reductase (438 aa).

Substrate-binding positions include 55–58 (TCNR), S118, 123–125 (ETQ), and Q129. The active-site Nucleophile is the C56. NADP(+) is bound at residue 198–203 (GAGDMI).

It belongs to the glutamyl-tRNA reductase family. In terms of assembly, homodimer.

It carries out the reaction (S)-4-amino-5-oxopentanoate + tRNA(Glu) + NADP(+) = L-glutamyl-tRNA(Glu) + NADPH + H(+). The protein operates within porphyrin-containing compound metabolism; protoporphyrin-IX biosynthesis; 5-aminolevulinate from L-glutamyl-tRNA(Glu): step 1/2. Its function is as follows. Catalyzes the NADPH-dependent reduction of glutamyl-tRNA(Glu) to glutamate 1-semialdehyde (GSA). In Polynucleobacter asymbioticus (strain DSM 18221 / CIP 109841 / QLW-P1DMWA-1) (Polynucleobacter necessarius subsp. asymbioticus), this protein is Glutamyl-tRNA reductase.